The chain runs to 777 residues: Aconitate hydratase, mitochondrial (777 aa).

Substrate is bound by residues Gln-96 and 189–191 (DSH). Residues Cys-383, Cys-446, and Cys-449 each coordinate [4Fe-4S] cluster. Substrate contacts are provided by residues Arg-472, Arg-477, Arg-605, and 668 to 669 (SR).

Belongs to the aconitase/IPM isomerase family. As to quaternary structure, monomer. It depends on [4Fe-4S] cluster as a cofactor.

The protein localises to the mitochondrion. It carries out the reaction citrate = D-threo-isocitrate. It functions in the pathway carbohydrate metabolism; tricarboxylic acid cycle; isocitrate from oxaloacetate: step 2/2. Its function is as follows. Catalyzes the isomerization of citrate to isocitrate via cis-aconitate, a step in the citric acid cycle. The protein is Aconitate hydratase, mitochondrial (ACO1) of Candida albicans (strain SC5314 / ATCC MYA-2876) (Yeast).